The sequence spans 233 residues: 5'-methylthioadenosine/S-adenosylhomocysteine nucleosidase (233 aa).

Catalysis depends on Glu12, which acts as the Proton acceptor. Residues Gly78, Ile156, and 177–178 contribute to the substrate site; that span reads ME. The active-site Proton donor is Asp201.

This sequence belongs to the PNP/UDP phosphorylase family. MtnN subfamily.

The catalysed reaction is S-adenosyl-L-homocysteine + H2O = S-(5-deoxy-D-ribos-5-yl)-L-homocysteine + adenine. It catalyses the reaction S-methyl-5'-thioadenosine + H2O = 5-(methylsulfanyl)-D-ribose + adenine. It carries out the reaction 5'-deoxyadenosine + H2O = 5-deoxy-D-ribose + adenine. Its pathway is amino-acid biosynthesis; L-methionine biosynthesis via salvage pathway; S-methyl-5-thio-alpha-D-ribose 1-phosphate from S-methyl-5'-thioadenosine (hydrolase route): step 1/2. Its function is as follows. Catalyzes the irreversible cleavage of the glycosidic bond in both 5'-methylthioadenosine (MTA) and S-adenosylhomocysteine (SAH/AdoHcy) to adenine and the corresponding thioribose, 5'-methylthioribose and S-ribosylhomocysteine, respectively. Also cleaves 5'-deoxyadenosine, a toxic by-product of radical S-adenosylmethionine (SAM) enzymes, into 5-deoxyribose and adenine. The protein is 5'-methylthioadenosine/S-adenosylhomocysteine nucleosidase of Listeria monocytogenes serovar 1/2a (strain ATCC BAA-679 / EGD-e).